A 749-amino-acid chain; its full sequence is Chitin synthase G (749 aa).

The next 5 helical transmembrane spans lie at 40-60 (CVGELVGIFLPVMIAILPLPP), 73-93 (VLQWFAFWAFSALLIIPWLFC), 421-441 (FMQNTIRTTALLFFILAISII), 451-471 (PVGFIAVSLGLNYILMVYFGI), and 483-503 (LMFILNPFFNWLYIVYGIFTA). Residues 683 to 749 (IESGSGIPSG…RRYMQPEQMV (67 aa)) form a disordered region. Residues 697 to 718 (LSSSVPQSGMQQSRAVPGNMSQ) are compositionally biased toward polar residues. Asparagine 715 is a glycosylation site (N-linked (GlcNAc...) asparagine). Residues 728–742 (YTKRPSRIPRQKRRY) are compositionally biased toward basic residues.

Belongs to the chitin synthase family. Class VI subfamily.

It is found in the cell membrane. The enzyme catalyses [(1-&gt;4)-N-acetyl-beta-D-glucosaminyl](n) + UDP-N-acetyl-alpha-D-glucosamine = [(1-&gt;4)-N-acetyl-beta-D-glucosaminyl](n+1) + UDP + H(+). Its function is as follows. Polymerizes chitin, a structural polymer of the cell wall and septum, by transferring the sugar moiety of UDP-GlcNAc to the non-reducing end of the growing chitin polymer. Plays an important role in septal growth or maintenance. Mediates colony spore formation. The protein is Chitin synthase G of Aspergillus niger (strain ATCC MYA-4892 / CBS 513.88 / FGSC A1513).